Here is a 688-residue protein sequence, read N- to C-terminus: Glycine--tRNA ligase beta subunit (688 aa).

It belongs to the class-II aminoacyl-tRNA synthetase family. In terms of assembly, tetramer of two alpha and two beta subunits.

The protein localises to the cytoplasm. It catalyses the reaction tRNA(Gly) + glycine + ATP = glycyl-tRNA(Gly) + AMP + diphosphate. The protein is Glycine--tRNA ligase beta subunit of Shewanella sp. (strain ANA-3).